The chain runs to 431 residues: Adenylosuccinate synthetase (431 aa).

GTP contacts are provided by residues 13 to 19 (GDEGKGK) and 41 to 43 (GHT). D14 functions as the Proton acceptor in the catalytic mechanism. Positions 14 and 41 each coordinate Mg(2+). IMP-binding positions include 14–17 (DEGK), 39–42 (NAGH), T130, R144, Q225, T240, and R304. H42 serves as the catalytic Proton donor. A substrate-binding site is contributed by 300–306 (AVTGRPR). Residues R306, 332–334 (KLD), and 415–417 (STG) contribute to the GTP site.

The protein belongs to the adenylosuccinate synthetase family. In terms of assembly, homodimer. Mg(2+) is required as a cofactor.

The protein localises to the cytoplasm. The catalysed reaction is IMP + L-aspartate + GTP = N(6)-(1,2-dicarboxyethyl)-AMP + GDP + phosphate + 2 H(+). The protein operates within purine metabolism; AMP biosynthesis via de novo pathway; AMP from IMP: step 1/2. In terms of biological role, plays an important role in the de novo pathway of purine nucleotide biosynthesis. Catalyzes the first committed step in the biosynthesis of AMP from IMP. In Legionella pneumophila subsp. pneumophila (strain Philadelphia 1 / ATCC 33152 / DSM 7513), this protein is Adenylosuccinate synthetase.